A 207-amino-acid chain; its full sequence is SPRY domain-containing protein 4 (207 aa).

The B30.2/SPRY domain maps to 12–206; the sequence is CRWGAKRLGV…THSGLEVPEG (195 aa). Residues Lys53 and Lys130 each carry the N6-acetyllysine modification. Lys139 is modified (N6-succinyllysine).

This chain is SPRY domain-containing protein 4 (SPRYD4), found in Homo sapiens (Human).